We begin with the raw amino-acid sequence, 297 residues long: Cbb3-type cytochrome c oxidase subunit CcoP (297 aa).

The Cytoplasmic segment spans residues 1–35; the sequence is MSKKPTTKKEVQTTGHSWDGIEELNTPLPRWWLWT. A helical transmembrane segment spans residues 36–56; it reads FYATIVWGVAYSIAMPAWPIF. The Periplasmic segment spans residues 57-297; it reads ASGATPGILG…SYVHSLGGGQ (241 aa). 2 Cytochrome c domains span residues 108–199 and 206–294; these read YTRN…LKIS and ARAT…HSLG. Residues Cys121, Cys124, His125, Met174, Cys219, Cys222, His223, and Met264 each coordinate heme c.

It belongs to the CcoP / FixP family. In terms of assembly, component of the cbb3-type cytochrome c oxidase at least composed of CcoN, CcoO, CcoQ and CcoP. Interacts with CcoH (via transmembrane domain). The cofactor is heme c.

It localises to the cell inner membrane. It functions in the pathway energy metabolism; oxidative phosphorylation. Functionally, C-type cytochrome. Part of the cbb3-type cytochrome c oxidase complex. CcoP subunit is required for transferring electrons from donor cytochrome c via its heme groups to CcoO subunit. From there, electrons are shuttled to the catalytic binuclear center of CcoN subunit where oxygen reduction takes place. The complex also functions as a proton pump. The sequence is that of Cbb3-type cytochrome c oxidase subunit CcoP from Rhodobacter capsulatus (strain ATCC BAA-309 / NBRC 16581 / SB1003).